The following is a 196-amino-acid chain: dTTP/UTP pyrophosphatase (196 aa).

Catalysis depends on Asp72, which acts as the Proton acceptor.

The protein belongs to the Maf family. YhdE subfamily. It depends on a divalent metal cation as a cofactor.

The protein resides in the cytoplasm. The enzyme catalyses dTTP + H2O = dTMP + diphosphate + H(+). The catalysed reaction is UTP + H2O = UMP + diphosphate + H(+). Functionally, nucleoside triphosphate pyrophosphatase that hydrolyzes dTTP and UTP. May have a dual role in cell division arrest and in preventing the incorporation of modified nucleotides into cellular nucleic acids. This is dTTP/UTP pyrophosphatase from Chlamydia trachomatis serovar L2 (strain ATCC VR-902B / DSM 19102 / 434/Bu).